The following is a 92-amino-acid chain: Neuropeptide F (92 aa).

Residues 1–27 (MSQSRPLALLVVAALVAAAVLVAAAEA) form the signal peptide. The propeptide occupies 28-51 (QQADGNKLEGLADALKYLQELDRY). The residue at position 60 (phenylalanine 60) is a Phenylalanine amide. Residues 64 to 92 (AELRPDVVDDVIPEEMSADKFWRRFARRR) constitute a propeptide that is removed on maturation.

This sequence belongs to the NPY family. As to expression, widely expressed in the nervous system. Expressed in corpora cardiaca, hypocerebral ganglion, frontal ganglion, protocerebrum, antennal lobe, tritocerebrum and thoracic ganglia. Not detected in corpora allata, pars intercerebralis, circumesophageal connectives, subesophageal ganglion, abdominal ganglion and abdominal perisympathetic organs.

Its subcellular location is the secreted. Accelerates ovarian maturation in females. The sequence is that of Neuropeptide F from Locusta migratoria (Migratory locust).